Reading from the N-terminus, the 472-residue chain is Dihydrolipoyl dehydrogenase 2 (472 aa).

FAD-binding positions include 39–47 (ERDAYGGTC), K56, and A118. A disulfide bond links C47 and C52. Residues 186-190 (GAGYI), E209, and 275-278 (AVGR) each bind NAD(+). Residues D318 and A326 each coordinate FAD. The active-site Proton acceptor is H450.

This sequence belongs to the class-I pyridine nucleotide-disulfide oxidoreductase family. Homodimer. FAD serves as cofactor.

It localises to the cytoplasm. It carries out the reaction N(6)-[(R)-dihydrolipoyl]-L-lysyl-[protein] + NAD(+) = N(6)-[(R)-lipoyl]-L-lysyl-[protein] + NADH + H(+). This Haloarcula marismortui (strain ATCC 43049 / DSM 3752 / JCM 8966 / VKM B-1809) (Halobacterium marismortui) protein is Dihydrolipoyl dehydrogenase 2 (lpdA2).